The following is a 426-amino-acid chain: NADH-quinone oxidoreductase subunit F (426 aa).

65 to 74 lines the NAD(+) pocket; the sequence is GRGGAGFPTG. Position 176 to 223 (176 to 223) interacts with FMN; it reads GAGAYICGEETALIESLEGKRGHPRLKPPYPVQKGLWGKPTVVNNVET. [4Fe-4S] cluster-binding residues include cysteine 347, cysteine 350, cysteine 353, and cysteine 393.

Belongs to the complex I 51 kDa subunit family. FMN serves as cofactor. Requires [4Fe-4S] cluster as cofactor.

The catalysed reaction is a quinone + NADH + 5 H(+)(in) = a quinol + NAD(+) + 4 H(+)(out). In terms of biological role, NDH-1 shuttles electrons from NADH, via FMN and iron-sulfur (Fe-S) centers, to quinones in the respiratory chain. Couples the redox reaction to proton translocation (for every two electrons transferred, four hydrogen ions are translocated across the cytoplasmic membrane), and thus conserves the redox energy in a proton gradient. This Aquifex aeolicus (strain VF5) protein is NADH-quinone oxidoreductase subunit F (nuoF).